The following is a 397-amino-acid chain: Elongation factor Tu (397 aa).

The 198-residue stretch at 10–207 (KPHVNVGTIG…TLDSYIPEPV (198 aa)) folds into the tr-type G domain. The G1 stretch occupies residues 19-26 (GHVDHGKT). 19-26 (GHVDHGKT) serves as a coordination point for GTP. Mg(2+) is bound at residue Thr26. The interval 60-64 (GITIN) is G2. A Phosphotyrosine modification is found at Tyr77. The G3 stretch occupies residues 81-84 (DCPG). 81-85 (DCPGH) lines the GTP pocket. Tyr88 carries the post-translational modification Phosphotyrosine. 136 to 139 (NKAD) is a binding site for GTP. The segment at 136–139 (NKAD) is G4. The G5 stretch occupies residues 174-176 (SAL).

It belongs to the TRAFAC class translation factor GTPase superfamily. Classic translation factor GTPase family. EF-Tu/EF-1A subfamily. As to quaternary structure, monomer.

It is found in the cytoplasm. The enzyme catalyses GTP + H2O = GDP + phosphate + H(+). Its function is as follows. GTP hydrolase that promotes the GTP-dependent binding of aminoacyl-tRNA to the A-site of ribosomes during protein biosynthesis. The protein is Elongation factor Tu of Pseudomonas aeruginosa (strain UCBPP-PA14).